A 450-amino-acid chain; its full sequence is 3-phosphoshikimate 1-carboxyvinyltransferase (450 aa).

The interval 1–23 is disordered; that stretch reads MSSHGAPIPMTSSACGPLTGEAR. 3-phosphoshikimate is bound by residues K28, S29, and R33. Position 28 (K28) interacts with phosphoenolpyruvate. 2 residues coordinate phosphoenolpyruvate: G101 and R129. 4 residues coordinate 3-phosphoshikimate: S174, Q176, D327, and K354. A phosphoenolpyruvate-binding site is contributed by Q176. Residue D327 is the Proton acceptor of the active site. Residues R358 and R403 each coordinate phosphoenolpyruvate.

This sequence belongs to the EPSP synthase family. As to quaternary structure, monomer.

The protein resides in the cytoplasm. It catalyses the reaction 3-phosphoshikimate + phosphoenolpyruvate = 5-O-(1-carboxyvinyl)-3-phosphoshikimate + phosphate. Its pathway is metabolic intermediate biosynthesis; chorismate biosynthesis; chorismate from D-erythrose 4-phosphate and phosphoenolpyruvate: step 6/7. In terms of biological role, catalyzes the transfer of the enolpyruvyl moiety of phosphoenolpyruvate (PEP) to the 5-hydroxyl of shikimate-3-phosphate (S3P) to produce enolpyruvyl shikimate-3-phosphate and inorganic phosphate. The chain is 3-phosphoshikimate 1-carboxyvinyltransferase from Roseobacter denitrificans (strain ATCC 33942 / OCh 114) (Erythrobacter sp. (strain OCh 114)).